Reading from the N-terminus, the 160-residue chain is Cytochrome b6-f complex subunit 4 (160 aa).

3 consecutive transmembrane segments (helical) span residues 36–56, 95–115, and 131–151; these read LLYIFPVVILGTIACNVGLAV, LLGVLLMVSVPAGLLTVPFLE, and TVFLIGTAVALWLGIGATLPI.

This sequence belongs to the cytochrome b family. PetD subfamily. The 4 large subunits of the cytochrome b6-f complex are cytochrome b6, subunit IV (17 kDa polypeptide, petD), cytochrome f and the Rieske protein, while the 4 small subunits are petG, petL, petM and petN. The complex functions as a dimer.

It localises to the plastid. The protein resides in the chloroplast thylakoid membrane. Functionally, component of the cytochrome b6-f complex, which mediates electron transfer between photosystem II (PSII) and photosystem I (PSI), cyclic electron flow around PSI, and state transitions. This Solanum bulbocastanum (Wild potato) protein is Cytochrome b6-f complex subunit 4.